Here is a 200-residue protein sequence, read N- to C-terminus: ATP-dependent Clp protease proteolytic subunit (200 aa).

The Nucleophile role is filled by S102. The active site involves H127.

This sequence belongs to the peptidase S14 family. In terms of assembly, fourteen ClpP subunits assemble into 2 heptameric rings which stack back to back to give a disk-like structure with a central cavity, resembling the structure of eukaryotic proteasomes.

The protein resides in the cytoplasm. The enzyme catalyses Hydrolysis of proteins to small peptides in the presence of ATP and magnesium. alpha-casein is the usual test substrate. In the absence of ATP, only oligopeptides shorter than five residues are hydrolyzed (such as succinyl-Leu-Tyr-|-NHMec, and Leu-Tyr-Leu-|-Tyr-Trp, in which cleavage of the -Tyr-|-Leu- and -Tyr-|-Trp bonds also occurs).. In terms of biological role, cleaves peptides in various proteins in a process that requires ATP hydrolysis. Has a chymotrypsin-like activity. Plays a major role in the degradation of misfolded proteins. The polypeptide is ATP-dependent Clp protease proteolytic subunit (Dehalococcoides mccartyi (strain ATCC BAA-2100 / JCM 16839 / KCTC 5957 / BAV1)).